The primary structure comprises 123 residues: Small ribosomal subunit protein uS13c (123 aa).

The interval 90 to 123 is disordered; that stretch reads GKRHRNNLPVRGQRTRTNARSRRGSKKTVTGKKK. Residues 102–123 show a composition bias toward basic residues; the sequence is QRTRTNARSRRGSKKTVTGKKK.

It belongs to the universal ribosomal protein uS13 family. Part of the 30S ribosomal subunit.

The protein resides in the plastid. The protein localises to the chloroplast. Functionally, located at the top of the head of the 30S subunit, it contacts several helices of the 16S rRNA. The chain is Small ribosomal subunit protein uS13c from Trieres chinensis (Marine centric diatom).